The primary structure comprises 491 residues: 3-phosphoinositide-dependent protein kinase 1 (491 aa).

The 268-residue stretch at 44 to 311 folds into the Protein kinase domain; the sequence is FEFGKIYGVG…YVALKRHPFF (268 aa). Residues 54-56 and lysine 73 contribute to the ATP site; that span reads SYS. Residues 75–119 form a PIF-pocket region; sequence MDKKFITKENKTAYVKLERIVLDQLEHPGIIKLYFTFQDTSSLYM. The interval 77–112 is PIF-binding; sequence KKFITKENKTAYVKLERIVLDQLEHPGIIKLYFTFQ. ATP-binding positions include 122 to 124 and glutamate 128; that span reads ESC. Aspartate 167 (proton acceptor) is an active-site residue. Glutamate 171 is a binding site for ATP. Position 177 is a phosphoserine (serine 177). Aspartate 185 contributes to the ATP binding site. Residues 185–222 are activation loop; the sequence is DFGSVKPMQDSQITVLPNAASDDKACTFVGTAAYVPPE. A Phosphothreonine; by autocatalysis modification is found at threonine 211. Residues serine 276 and serine 337 each carry the phosphoserine modification. A disordered region spans residues 321-377; that stretch reads SQTPPKLAPDPASQTASPERDDTHGSPWNLTHIGDSLATQNEGHSAPPTSSESSGSI. Low complexity predominate over residues 365 to 376; sequence SAPPTSSESSGS. Position 382 is a phosphoserine (serine 382). In terms of domain architecture, PH spans 386–491; that stretch reads FDSRWQQFLE…KKAIETLQNR (106 aa).

This sequence belongs to the protein kinase superfamily. AGC Ser/Thr protein kinase family. PDPK1 subfamily. As to quaternary structure, interacts with AGC1-5 and AGC1-7. Interacts with the C-terminal PIF domain of the protein kinases D6PK/AGC1-1, OXI1/AGC2-1 and PID. Post-translationally, phosphorylation on Thr-211 in the activation loop is required for full activity. PDK1 itself can autophosphorylate Thr-211, leading to its own activation. As to expression, ubiquitous.

It localises to the cytoplasm. It is found in the membrane. The catalysed reaction is L-seryl-[protein] + ATP = O-phospho-L-seryl-[protein] + ADP + H(+). It catalyses the reaction L-threonyl-[protein] + ATP = O-phospho-L-threonyl-[protein] + ADP + H(+). With respect to regulation, activated by phosphatidic acid (PA) and in response to the fungal elicitor xylanase. Its function is as follows. May couple lipid signals to the activation-loop phosphorylation of several protein kinases of the so-called AGC kinase family. Interacts via its pleckstrin homology domain with phosphatidic acid, PtdIns3P and PtdIns(3,4)P2 and to a lesser extent with PtdIns(4,5)P2 and PtdIns4P. May play a general role in signaling processes controlling the pathogen/stress response, polar auxin transport and development. Transphosphorylates the AGC protein kinases OXI1/AGC2-1, PK1/S6K1, PK19/S6K2 and PID resulting in their activation. This chain is 3-phosphoinositide-dependent protein kinase 1 (PDPK1), found in Arabidopsis thaliana (Mouse-ear cress).